Here is a 297-residue protein sequence, read N- to C-terminus: Nitrogenase iron protein (297 aa).

11-18 contacts ATP; it reads GKGGIGKS. Cys-99 contributes to the [4Fe-4S] cluster binding site. Arg-102 carries the ADP-ribosylarginine; by dinitrogenase reductase ADP-ribosyltransferase modification. Cys-133 lines the [4Fe-4S] cluster pocket.

This sequence belongs to the NifH/BchL/ChlL family. Homodimer. [4Fe-4S] cluster serves as cofactor. The reversible ADP-ribosylation of Arg-102 inactivates the nitrogenase reductase and regulates nitrogenase activity.

It carries out the reaction N2 + 8 reduced [2Fe-2S]-[ferredoxin] + 16 ATP + 16 H2O = H2 + 8 oxidized [2Fe-2S]-[ferredoxin] + 2 NH4(+) + 16 ADP + 16 phosphate + 6 H(+). The key enzymatic reactions in nitrogen fixation are catalyzed by the nitrogenase complex, which has 2 components: the iron protein and the molybdenum-iron protein. This chain is Nitrogenase iron protein, found in Mesorhizobium japonicum (strain LMG 29417 / CECT 9101 / MAFF 303099) (Mesorhizobium loti (strain MAFF 303099)).